The following is a 330-amino-acid chain: 4-hydroxythreonine-4-phosphate dehydrogenase (330 aa).

Threonine 133 is a substrate binding site. Histidine 161, histidine 206, and histidine 261 together coordinate a divalent metal cation. Substrate contacts are provided by lysine 269, asparagine 278, and arginine 287.

The protein belongs to the PdxA family. As to quaternary structure, homodimer. Zn(2+) is required as a cofactor. Mg(2+) serves as cofactor. Requires Co(2+) as cofactor.

The protein resides in the cytoplasm. The enzyme catalyses 4-(phosphooxy)-L-threonine + NAD(+) = 3-amino-2-oxopropyl phosphate + CO2 + NADH. It participates in cofactor biosynthesis; pyridoxine 5'-phosphate biosynthesis; pyridoxine 5'-phosphate from D-erythrose 4-phosphate: step 4/5. In terms of biological role, catalyzes the NAD(P)-dependent oxidation of 4-(phosphooxy)-L-threonine (HTP) into 2-amino-3-oxo-4-(phosphooxy)butyric acid which spontaneously decarboxylates to form 3-amino-2-oxopropyl phosphate (AHAP). The sequence is that of 4-hydroxythreonine-4-phosphate dehydrogenase from Xylella fastidiosa (strain 9a5c).